Here is a 222-residue protein sequence, read N- to C-terminus: 2-C-methyl-D-erythritol 4-phosphate cytidylyltransferase (222 aa).

Belongs to the IspD/TarI cytidylyltransferase family. IspD subfamily.

The enzyme catalyses 2-C-methyl-D-erythritol 4-phosphate + CTP + H(+) = 4-CDP-2-C-methyl-D-erythritol + diphosphate. Its pathway is isoprenoid biosynthesis; isopentenyl diphosphate biosynthesis via DXP pathway; isopentenyl diphosphate from 1-deoxy-D-xylulose 5-phosphate: step 2/6. Its function is as follows. Catalyzes the formation of 4-diphosphocytidyl-2-C-methyl-D-erythritol from CTP and 2-C-methyl-D-erythritol 4-phosphate (MEP). The chain is 2-C-methyl-D-erythritol 4-phosphate cytidylyltransferase from Porphyromonas gingivalis (strain ATCC BAA-308 / W83).